We begin with the raw amino-acid sequence, 252 residues long: Chitooligosaccharide deacetylase (252 aa).

Mg(2+) contacts are provided by His61 and His125.

Belongs to the YdjC deacetylase family. ChbG subfamily. Homodimer. Mg(2+) is required as a cofactor.

It localises to the cytoplasm. The catalysed reaction is N,N'-diacetylchitobiose + H2O = N-acetyl-beta-D-glucosaminyl-(1-&gt;4)-D-glucosamine + acetate. The enzyme catalyses diacetylchitobiose-6'-phosphate + H2O = N'-monoacetylchitobiose-6'-phosphate + acetate. The protein operates within glycan degradation; chitin degradation. Functionally, involved in the degradation of chitin. ChbG is essential for growth on the acetylated chitooligosaccharides chitobiose and chitotriose but is dispensable for growth on cellobiose and chitosan dimer, the deacetylated form of chitobiose. Deacetylation of chitobiose-6-P and chitotriose-6-P is necessary for both the activation of the chb promoter by the regulatory protein ChbR and the hydrolysis of phosphorylated beta-glucosides by the phospho-beta-glucosidase ChbF. Catalyzes the removal of only one acetyl group from chitobiose-6-P to yield monoacetylchitobiose-6-P, the inducer of ChbR and the substrate of ChbF. This Salmonella newport (strain SL254) protein is Chitooligosaccharide deacetylase.